A 67-amino-acid polypeptide reads, in one-letter code: Large ribosomal subunit protein uL29 (67 aa).

The protein belongs to the universal ribosomal protein uL29 family.

The polypeptide is Large ribosomal subunit protein uL29 (Exiguobacterium sibiricum (strain DSM 17290 / CCUG 55495 / CIP 109462 / JCM 13490 / 255-15)).